A 321-amino-acid polypeptide reads, in one-letter code: Transaldolase (321 aa).

Lys-132 acts as the Schiff-base intermediate with substrate in catalysis.

This sequence belongs to the transaldolase family. Type 1 subfamily. As to quaternary structure, homodimer.

Its subcellular location is the cytoplasm. It catalyses the reaction D-sedoheptulose 7-phosphate + D-glyceraldehyde 3-phosphate = D-erythrose 4-phosphate + beta-D-fructose 6-phosphate. It participates in carbohydrate degradation; pentose phosphate pathway; D-glyceraldehyde 3-phosphate and beta-D-fructose 6-phosphate from D-ribose 5-phosphate and D-xylulose 5-phosphate (non-oxidative stage): step 2/3. Functionally, transaldolase is important for the balance of metabolites in the pentose-phosphate pathway. The chain is Transaldolase from Marinobacter nauticus (strain ATCC 700491 / DSM 11845 / VT8) (Marinobacter aquaeolei).